The sequence spans 377 residues: Cytochrome b (377 aa).

The next 4 membrane-spanning stretches (helical) occupy residues 33–53, 77–98, 113–133, and 178–198; these read FGSL…FLAM, WLIR…YLHT, WTMG…GYVL, and FFMI…VHLL. Residues H83 and H97 each coordinate heme b. Heme b-binding residues include H182 and H196. H201 contacts a ubiquinone. The next 4 helical transmembrane spans lie at 226–246, 288–308, 320–340, and 347–367; these read YKDL…SLLS, LGGV…PLSS, FNQI…WIGA, and FIIM…LNPM.

This sequence belongs to the cytochrome b family. As to quaternary structure, the main subunits of complex b-c1 are: cytochrome b, cytochrome c1 and the Rieske protein. Heme b is required as a cofactor.

It localises to the mitochondrion inner membrane. Component of the ubiquinol-cytochrome c reductase complex (complex III or cytochrome b-c1 complex) that is part of the mitochondrial respiratory chain. The b-c1 complex mediates electron transfer from ubiquinol to cytochrome c. Contributes to the generation of a proton gradient across the mitochondrial membrane that is then used for ATP synthesis. The sequence is that of Cytochrome b (MT-CYB) from Tetrodontophora bielanensis (Giant springtail).